The primary structure comprises 177 residues: MADVISSLQTQLKELDTKFAGNNVLNQLEQRTNLPKSYLVVGSTIFYLLLIFINVGGIGEILGNFAGFVIPAYYSILALKTTTTKDDTQLLTYWIVFSFLNVIEFWSKALLYIIPFYWFLKTIFLLYIALPQTGGATMIYNRFISPLTDKYILGPKKTDGVQQSVKEASRATGAATH.

The Cytoplasmic segment spans residues 1 to 35; the sequence is MADVISSLQTQLKELDTKFAGNNVLNQLEQRTNLP. The chain crosses the membrane as a helical span at residues 36 to 55; that stretch reads KSYLVVGSTIFYLLLIFINV. Residues 56 to 57 lie on the Lumenal side of the membrane; that stretch reads GG. Residues 58 to 78 traverse the membrane as a helical segment; sequence IGEILGNFAGFVIPAYYSILA. Residues 79–88 lie on the Cytoplasmic side of the membrane; it reads LKTTTTKDDT. A helical transmembrane segment spans residues 89–103; that stretch reads QLLTYWIVFSFLNVI. At 104 to 108 the chain is on the lumenal side; that stretch reads EFWSK. The chain crosses the membrane as a helical span at residues 109–127; it reads ALLYIIPFYWFLKTIFLLY. The Cytoplasmic portion of the chain corresponds to 128 to 177; the sequence is IALPQTGGATMIYNRFISPLTDKYILGPKKTDGVQQSVKEASRATGAATH.

This sequence belongs to the DP1 family. In terms of assembly, oligomer.

It is found in the endoplasmic reticulum membrane. The protein localises to the golgi apparatus membrane. Required to generate and maintain the structure of the tubular endoplasmic reticulum network and the vacuole. Induces high curvature in membranes and causes membrane tubule formation. Involved in membrane/vesicle trafficking. This Candida glabrata (strain ATCC 2001 / BCRC 20586 / JCM 3761 / NBRC 0622 / NRRL Y-65 / CBS 138) (Yeast) protein is Protein YOP1 (YOP1).